The chain runs to 317 residues: Ribosomal protein L11 methyltransferase (317 aa).

S-adenosyl-L-methionine is bound by residues threonine 158, glycine 179, aspartate 201, and asparagine 244.

It belongs to the methyltransferase superfamily. PrmA family.

It is found in the cytoplasm. It carries out the reaction L-lysyl-[protein] + 3 S-adenosyl-L-methionine = N(6),N(6),N(6)-trimethyl-L-lysyl-[protein] + 3 S-adenosyl-L-homocysteine + 3 H(+). Its function is as follows. Methylates ribosomal protein L11. This Streptococcus equi subsp. equi (strain 4047) protein is Ribosomal protein L11 methyltransferase.